Reading from the N-terminus, the 80-residue chain is Defensin-like protein 51 (80 aa).

The first 27 residues, Met-1–Ala-27, serve as a signal peptide directing secretion. 4 disulfides stabilise this stretch: Cys-39–Cys-79, Cys-43–Cys-66, Cys-52–Cys-77, and Cys-56–Cys-78.

This sequence belongs to the DEFL family.

The protein resides in the secreted. This Arabidopsis thaliana (Mouse-ear cress) protein is Defensin-like protein 51 (LCR48).